The primary structure comprises 301 residues: Tyrosine recombinase XerD (301 aa).

Residues Pro-6 to Lys-89 enclose the Core-binding (CB) domain. The 186-residue stretch at Arg-108–His-293 folds into the Tyr recombinase domain. Active-site residues include Arg-152, Lys-174, His-245, Arg-248, and His-271. The active-site O-(3'-phospho-DNA)-tyrosine intermediate is Tyr-280.

This sequence belongs to the 'phage' integrase family. XerD subfamily. Forms a cyclic heterotetrameric complex composed of two molecules of XerC and two molecules of XerD.

The protein localises to the cytoplasm. Functionally, site-specific tyrosine recombinase, which acts by catalyzing the cutting and rejoining of the recombining DNA molecules. The XerC-XerD complex is essential to convert dimers of the bacterial chromosome into monomers to permit their segregation at cell division. It also contributes to the segregational stability of plasmids. This Chlamydia muridarum (strain MoPn / Nigg) protein is Tyrosine recombinase XerD.